The primary structure comprises 406 residues: E3 ubiquitin-protein ligase RING1 (406 aa).

Residue T24 is modified to Phosphothreonine. The necessary for transcriptional repression stretch occupies residues 30–234 (MDGTEIAVSP…GGAGSEDSGD (205 aa)). S38 is modified (phosphoserine). The RING-type zinc-finger motif lies at 48–88 (CPICLDMLKNTMTTKECLHRFCSDCIVTALRSGNKECPTCR). Phosphoserine is present on residues S140, S187, and S190. 2 disordered regions span residues 148-263 (QAMH…GEIE) and 309-354 (QQQE…PSLE). Positions 175-187 (EPGEGEGDGEDVS) are enriched in acidic residues. The Nuclear localization signal motif lies at 201–204 (KRPR). The segment covering 205-228 (GGGAGGSSVGTGGGGTGGVGGGAG) has biased composition (gly residues). 2 positions are modified to phosphothreonine: T215 and T220. Phosphoserine is present on residues S229 and S232. Residues 230–406 (EDSGDRGGTL…LCYAPTKDPK (177 aa)) are necessary for interaction with CBX2. A compositionally biased stretch (gly residues) spans 235–244 (RGGTLGGGTL). Over residues 246 to 258 (PPSPPGAPSPPEP) the composition is skewed to pro residues. Phosphoserine is present on residues S248 and S254. Gly residues predominate over residues 315 to 343 (EPGGPGGGASDTGGPDGCGGEGGGAGGGD).

In terms of assembly, component of chromatin-associated Polycomb (PcG) complexes. Interacts with BMI1. Part of the E2F6.com-1 complex in G0 phase composed of E2F6, MGA, MAX, TFDP1, CBX3, BAT8, EUHMTASE1, RING1, RNF2/RING2 MBLR, L3MBTL2 and YAF2. Interacts with CBX2 and PCGF6. Component of a PRC1-like complex. Component of repressive BCOR complex containing Polycomb group subcomplex at least composed of RYBP, PCGF1, BCOR and RNF2/RING2. Interacts with PCGF2, RNF2; CBX6, CBX7 and CBX8. Interacts with PHC2. Interacts with MN1. Interacts with USP26.

It localises to the nucleus. The protein resides in the nucleus speckle. The catalysed reaction is S-ubiquitinyl-[E2 ubiquitin-conjugating enzyme]-L-cysteine + [acceptor protein]-L-lysine = [E2 ubiquitin-conjugating enzyme]-L-cysteine + N(6)-ubiquitinyl-[acceptor protein]-L-lysine.. The protein operates within protein modification; protein ubiquitination. Constitutes one of the E3 ubiquitin-protein ligases that mediate monoubiquitination of 'Lys-119' of histone H2A, thereby playing a central role in histone code and gene regulation. H2A 'Lys-119' ubiquitination gives a specific tag for epigenetic transcriptional repression and participates in X chromosome inactivation of female mammals. Essential component of a Polycomb group (PcG) multiprotein PRC1-like complex, a complex class required to maintain the transcriptionally repressive state of many genes, including Hox genes, throughout development. PcG PRC1 complex acts via chromatin remodeling and modification of histones, rendering chromatin heritably changed in its expressibility. Compared to RNF2/RING2, it does not have the main E3 ubiquitin ligase activity on histone H2A, and it may rather act as a modulator of RNF2/RING2 activity. This chain is E3 ubiquitin-protein ligase RING1, found in Homo sapiens (Human).